Reading from the N-terminus, the 206-residue chain is GTP cyclohydrolase 1 (206 aa).

Residues Cys95, His98, and Cys166 each coordinate Zn(2+).

The protein belongs to the GTP cyclohydrolase I family. Toroid-shaped homodecamer, composed of two pentamers of five dimers.

The catalysed reaction is GTP + H2O = 7,8-dihydroneopterin 3'-triphosphate + formate + H(+). The protein operates within cofactor biosynthesis; 7,8-dihydroneopterin triphosphate biosynthesis; 7,8-dihydroneopterin triphosphate from GTP: step 1/1. In Bartonella bacilliformis (strain ATCC 35685 / KC583 / Herrer 020/F12,63), this protein is GTP cyclohydrolase 1.